The following is a 137-amino-acid chain: Large ribosomal subunit protein uL16 (137 aa).

Belongs to the universal ribosomal protein uL16 family. As to quaternary structure, part of the 50S ribosomal subunit.

In terms of biological role, binds 23S rRNA and is also seen to make contacts with the A and possibly P site tRNAs. This is Large ribosomal subunit protein uL16 from Baumannia cicadellinicola subsp. Homalodisca coagulata.